We begin with the raw amino-acid sequence, 753 residues long: Replication restart protein PriA (753 aa).

A Helicase ATP-binding domain is found at 228 to 395; it reads SLVAEQFQTC…LSKKYTLSVL (168 aa). Position 241 to 248 (241 to 248) interacts with ATP; sequence GVTGSGKT. The short motif at 337-340 is the DEAH box element; sequence DEEH. The Zn(2+) site is built by cysteine 458, cysteine 461, cysteine 467, cysteine 470, cysteine 485, cysteine 488, cysteine 499, and cysteine 502. Residues 491–646 enclose the Helicase C-terminal domain; it reads RLSKPITSCP…DFPAFYKEEI (156 aa).

Belongs to the helicase family. PriA subfamily. In terms of assembly, component of the replication restart primosome. It depends on Zn(2+) as a cofactor.

The catalysed reaction is Couples ATP hydrolysis with the unwinding of duplex DNA by translocating in the 3'-5' direction.. It carries out the reaction ATP + H2O = ADP + phosphate + H(+). Initiates the restart of stalled replication forks, which reloads the replicative helicase on sites other than the origin of replication. Recognizes and binds to abandoned replication forks and remodels them to uncover a helicase loading site. Promotes assembly of the primosome at these replication forks. In Chlamydia trachomatis serovar D (strain ATCC VR-885 / DSM 19411 / UW-3/Cx), this protein is Replication restart protein PriA.